The primary structure comprises 237 residues: Lycopene beta-cyclase (237 aa).

The next 7 helical transmembrane spans lie at 3 to 23 (TSYL…LGVV), 38 to 58 (VGIL…YLIA), 80 to 100 (EYLF…ALPL), 113 to 133 (AVLG…LLTV), 137 to 157 (FYIG…WAVG), 170 to 192 (AAVL…DGIW), and 213 to 233 (AFFF…AWVL).

The protein belongs to the lycopene beta-cyclase family.

It localises to the cell membrane. The enzyme catalyses a carotenoid psi-end group = a carotenoid beta-end derivative. It catalyses the reaction all-trans-lycopene = gamma-carotene. The catalysed reaction is gamma-carotene = all-trans-beta-carotene. It functions in the pathway carotenoid biosynthesis; beta-carotene biosynthesis. In terms of biological role, catalyzes the cyclization of both ends of lycopene to form beta-carotene, a retinal precursor. Is required for bacteriorhodopsin biogenesis, a light-driven proton pump with a covalently bound retinal cofactor. The polypeptide is Lycopene beta-cyclase (Halobacterium salinarum (strain ATCC 29341 / DSM 671 / R1)).